Here is a 405-residue protein sequence, read N- to C-terminus: MQFLHNKNVFALLLSQSFQSLAGVLVTIVLMVRIYQMTDSVFLAGLILSFMSFASIAASFCVSPVLRILGFKKVLAGANLLRAVFIILMAYSVTHHGQAFFWITLLFVFCFSFAGAFFQPARFALLPIIVPKKQYVKANGVISLSNQLFLTAGWGLGGLLTYAVPFELVVGAAICLFVLSGASISVLHVNEEEAAGTAETASVRSIWKDLMIIPIVRDITVMDMLEALAGSVWSSAILLAFTAAVLHETEVWWGMFNASYFIGAIVGSVIAIRFSSFFERNMGYAIMFSSLVMSALTLLFSFSPVPFLCALACAAMGPFYQVRDICQETMLQEVIPEQKRIGIMAAKNAILTPWSGVTYSIMGLVADAAGAKIAFIAAAALYIMTFLIALAQPRLVHYRRENRVQ.

10 consecutive transmembrane segments (helical) span residues 9-29 (VFAL…VTIV), 41-61 (VFLA…ASFC), 74-94 (VLAG…YSVT), 98-118 (QAFF…GAFF), 138-158 (ANGV…GLGG), 168-190 (LVVG…LHVN), 227-247 (ALAG…AVLH), 252-272 (WWGM…VIAI), 291-311 (LVMS…LCAL), and 373-393 (IAFI…LAQP).

This sequence belongs to the major facilitator superfamily. Drug:H(+) antiporter-3 (DHA3) (TC 2.A.1.21) family.

The protein resides in the cell membrane. This is an uncharacterized protein from Bacillus subtilis (strain 168).